A 295-amino-acid chain; its full sequence is Ankyrin repeat and SOCS box protein 17 (295 aa).

An ANK repeat occupies 146 to 176 (SGITPLFYVAQTRQSNIFKILLQYGILEREK). The SOCS box domain occupies 232–295 (LGRRPIISNW…RLQNYLNLEI (64 aa)).

This sequence belongs to the ankyrin SOCS box (ASB) family.

It participates in protein modification; protein ubiquitination. In terms of biological role, may be a substrate-recognition component of a SCF-like ECS (Elongin-Cullin-SOCS-box protein) E3 ubiquitin-protein ligase complex which mediates the ubiquitination and subsequent proteasomal degradation of target proteins. The protein is Ankyrin repeat and SOCS box protein 17 (ASB17) of Macaca fascicularis (Crab-eating macaque).